Consider the following 306-residue polypeptide: Protoheme IX farnesyltransferase (306 aa).

The next 9 helical transmembrane spans lie at 35-55 (LIVF…PTWL), 61-81 (LIAC…NCLV), 106-126 (LTLA…YVWV), 129-149 (LTMW…TVIL), 157-177 (IVIG…AMTG), 183-203 (ALIL…ALAL), 224-244 (EFTR…CLMP), 245-265 (FIFK…SIGF), and 286-306 (RFSL…HYLI).

Belongs to the UbiA prenyltransferase family. Protoheme IX farnesyltransferase subfamily.

It is found in the cell inner membrane. The catalysed reaction is heme b + (2E,6E)-farnesyl diphosphate + H2O = Fe(II)-heme o + diphosphate. It functions in the pathway porphyrin-containing compound metabolism; heme O biosynthesis; heme O from protoheme: step 1/1. Its function is as follows. Converts heme B (protoheme IX) to heme O by substitution of the vinyl group on carbon 2 of heme B porphyrin ring with a hydroxyethyl farnesyl side group. The sequence is that of Protoheme IX farnesyltransferase from Polaromonas naphthalenivorans (strain CJ2).